A 116-amino-acid chain; its full sequence is Large ribosomal subunit protein uL18 (116 aa).

This sequence belongs to the universal ribosomal protein uL18 family. As to quaternary structure, part of the 50S ribosomal subunit; part of the 5S rRNA/L5/L18/L25 subcomplex. Contacts the 5S and 23S rRNAs.

This is one of the proteins that bind and probably mediate the attachment of the 5S RNA into the large ribosomal subunit, where it forms part of the central protuberance. This is Large ribosomal subunit protein uL18 from Pseudoalteromonas translucida (strain TAC 125).